The sequence spans 161 residues: Regulator of ribonuclease activity A (161 aa).

This sequence belongs to the RraA family. Homotrimer. Binds to both RNA-binding sites in the C-terminal region of Rne and to RhlB.

It is found in the cytoplasm. Globally modulates RNA abundance by binding to RNase E (Rne) and regulating its endonucleolytic activity. Can modulate Rne action in a substrate-dependent manner by altering the composition of the degradosome. Modulates RNA-binding and helicase activities of the degradosome. The chain is Regulator of ribonuclease activity A from Shigella boydii serotype 18 (strain CDC 3083-94 / BS512).